Here is a 175-residue protein sequence, read N- to C-terminus: Myosin regulatory light chain 2, atrial isoform (175 aa).

A2 bears the N-acetylalanine mark. Phosphoserine occurs at positions 22 and 23. EF-hand domains lie at A32–V67, D102–K137, and F138–K173. Ca(2+) is bound by residues D45, N47, D49, and D56.

As to quaternary structure, myosin is a hexamer of 2 heavy chains and 4 light chains.

The protein is Myosin regulatory light chain 2, atrial isoform (MYL7) of Sus scrofa (Pig).